Here is a 277-residue protein sequence, read N- to C-terminus: Large ribosomal subunit protein uL2 (277 aa).

Disordered stretches follow at residues 32 to 58 and 225 to 277; these read KSLTKGKKFKSGRDSSGRISIRRRGGG and VAMN…RRNK. Basic residues predominate over residues 258 to 277; the sequence is YKTRKKKRYSDKFIIKRRNK.

The protein belongs to the universal ribosomal protein uL2 family. As to quaternary structure, part of the 50S ribosomal subunit. Forms a bridge to the 30S subunit in the 70S ribosome.

In terms of biological role, one of the primary rRNA binding proteins. Required for association of the 30S and 50S subunits to form the 70S ribosome, for tRNA binding and peptide bond formation. It has been suggested to have peptidyltransferase activity; this is somewhat controversial. Makes several contacts with the 16S rRNA in the 70S ribosome. This is Large ribosomal subunit protein uL2 from Borreliella afzelii (strain PKo) (Borrelia afzelii).